Reading from the N-terminus, the 165-residue chain is UPF0763 protein NIS_0363 (165 aa).

Belongs to the UPF0763 family.

In Nitratiruptor sp. (strain SB155-2), this protein is UPF0763 protein NIS_0363.